A 231-amino-acid chain; its full sequence is 6-hydroxymethyl-7,8-dihydropterin pyrophosphokinase (231 aa).

The protein belongs to the archaeal 6-HMPDK family. The cofactor is Mg(2+).

It carries out the reaction 6-hydroxymethyl-7,8-dihydropterin + ATP = (7,8-dihydropterin-6-yl)methyl diphosphate + AMP + H(+). Functionally, catalyzes the transfer of diphosphate from ATP to 6-hydroxymethyl-7,8-dihydropterin (6-HMD), leading to 6-hydroxymethyl-7,8-dihydropterin diphosphate (6-HMDP). To a lesser extent, can also use CTP, UTP, and GTP as the nucleotide triphosphate substrate. This Pyrococcus furiosus (strain ATCC 43587 / DSM 3638 / JCM 8422 / Vc1) protein is 6-hydroxymethyl-7,8-dihydropterin pyrophosphokinase.